The primary structure comprises 93 residues: Cell division protein CrgA (93 aa).

2 consecutive transmembrane segments (helical) span residues 31–51 (VWFV…LMVF) and 70–90 (LGPW…LLTM).

This sequence belongs to the CrgA family.

It localises to the cell membrane. Involved in cell division. This Mycobacterium leprae (strain Br4923) protein is Cell division protein CrgA.